Consider the following 241-residue polypeptide: 1-Cys peroxiredoxin (241 aa).

The Thioredoxin domain occupies 33 to 189 (LRIGDVVPDF…IIRILDSFQL (157 aa)). The active-site Cysteine sulfenic acid (-SOH) intermediate is Cys-75.

The protein belongs to the peroxiredoxin family. Prx6 subfamily. In terms of assembly, homodimer.

It carries out the reaction a hydroperoxide + [thioredoxin]-dithiol = an alcohol + [thioredoxin]-disulfide + H2O. In terms of biological role, thiol-specific peroxidase that catalyzes the reduction of hydrogen peroxide and organic hydroperoxides to water and alcohols, respectively. Plays a role in cell protection against oxidative stress by detoxifying peroxides. This Dictyostelium discoideum (Social amoeba) protein is 1-Cys peroxiredoxin.